A 272-amino-acid chain; its full sequence is Cytochrome b-c1 complex subunit Rieske, mitochondrial (272 aa).

The Mitochondrial matrix portion of the chain corresponds to 77–104 (VHNDVTVPDFSAYRREDVMDATTSSQTS). The helical transmembrane segment at 105–138 (SEDRKGFSYLVTATACVATAYAAKNVVTQFISSL) threads the bilayer. Residues 139 to 272 (SASADVLALS…FVGDDLVVVG (134 aa)) lie on the Mitochondrial intermembrane side of the membrane. Positions 185-270 (EAEVDVSKLR…YQFVGDDLVV (86 aa)) constitute a Rieske domain. [2Fe-2S] cluster is bound by residues Cys-215, His-217, Leu-218, Cys-234, His-237, and Ser-239. An intrachain disulfide couples Cys-220 to Cys-236.

The protein belongs to the Rieske iron-sulfur protein family. As to quaternary structure, component of the ubiquinol-cytochrome c oxidoreductase (cytochrome b-c1 complex, complex III, CIII), a multisubunit enzyme composed of 11 subunits. The complex is composed of 3 respiratory subunits cytochrome b, cytochrome c1 and Rieske protein UQCRFS1, 2 core protein subunits UQCRC1/QCR1 and UQCRC2/QCR2, and 6 low-molecular weight protein subunits UQCRH/QCR6, UQCRB/QCR7, UQCRQ/QCR8, UQCR10/QCR9, UQCR11/QCR10 and subunit 9, the cleavage product of Rieske protein UQCRFS1. The complex exists as an obligatory dimer and forms supercomplexes (SCs) in the inner mitochondrial membrane with NADH-ubiquinone oxidoreductase (complex I, CI) and cytochrome c oxidase (complex IV, CIV), resulting in different assemblies (supercomplex SCI(1)III(2)IV(1) and megacomplex MCI(2)III(2)IV(2)). Incorporation of the Rieske protein UQCRFS1 is the penultimate step in complex III assembly. Interacts with TTC19, which is involved in the clearance of UQCRFS1 fragments. Component of the ubiquinol-cytochrome c oxidoreductase (cytochrome b-c1 complex, complex III, CIII). Subunit 9 corresponds to the mitochondrial targeting sequence (MTS) of Rieske protein UQCRFS1. It is retained after processing and incorporated inside complex III, where it remains bound to the complex and localizes between the 2 core subunits UQCRC1/QCR1 and UQCRC2/QCR2. Requires [2Fe-2S] cluster as cofactor. Post-translationally, proteolytic processing is necessary for the correct insertion of UQCRFS1 in the complex III dimer. Several fragments are generated during UQCRFS1 insertion, most probably due to the endogenous matrix-processing peptidase (MPP) activity of the 2 core protein subunits UQCRC1/QCR1 and UQCRC2/QCR2, which are homologous to the 2 mitochondrial-processing peptidase (MPP) subunits beta-MPP and alpha-MPP respectively. The action of the protease is also necessary for the clearance of the UQCRFS1 fragments.

It is found in the mitochondrion inner membrane. The catalysed reaction is a quinol + 2 Fe(III)-[cytochrome c](out) = a quinone + 2 Fe(II)-[cytochrome c](out) + 2 H(+)(out). In terms of biological role, component of the ubiquinol-cytochrome c oxidoreductase, a multisubunit transmembrane complex that is part of the mitochondrial electron transport chain which drives oxidative phosphorylation. The respiratory chain contains 3 multisubunit complexes succinate dehydrogenase (complex II, CII), ubiquinol-cytochrome c oxidoreductase (cytochrome b-c1 complex, complex III, CIII) and cytochrome c oxidase (complex IV, CIV), that cooperate to transfer electrons derived from NADH and succinate to molecular oxygen, creating an electrochemical gradient over the inner membrane that drives transmembrane transport and the ATP synthase. The cytochrome b-c1 complex catalyzes electron transfer from ubiquinol to cytochrome c, linking this redox reaction to translocation of protons across the mitochondrial inner membrane, with protons being carried across the membrane as hydrogens on the quinol. In the process called Q cycle, 2 protons are consumed from the matrix, 4 protons are released into the intermembrane space and 2 electrons are passed to cytochrome c. The Rieske protein is a catalytic core subunit containing a [2Fe-2S] iron-sulfur cluster. It cycles between 2 conformational states during catalysis to transfer electrons from the quinol bound in the Q(0) site in cytochrome b to cytochrome c1. Incorporation of UQCRFS1 is the penultimate step in complex III assembly. Functionally, component of the ubiquinol-cytochrome c oxidoreductase (cytochrome b-c1 complex, complex III, CIII). UQCRFS1 undergoes proteolytic processing once it is incorporated in the complex III dimer. One of the fragments, called subunit 9, corresponds to its mitochondrial targeting sequence (MTS). The proteolytic processing is necessary for the correct insertion of UQCRFS1 in the complex III dimer, but the persistence of UQCRFS1-derived fragments may prevent newly imported UQCRFS1 to be processed and assembled into complex III and is detrimental for the complex III structure and function. The chain is Cytochrome b-c1 complex subunit Rieske, mitochondrial (UQCRFS1) from Gallus gallus (Chicken).